We begin with the raw amino-acid sequence, 302 residues long: Sulfate adenylyltransferase subunit 2 (302 aa).

The protein belongs to the PAPS reductase family. CysD subfamily. As to quaternary structure, heterodimer composed of CysD, the smaller subunit, and CysN.

The enzyme catalyses sulfate + ATP + H(+) = adenosine 5'-phosphosulfate + diphosphate. Its pathway is sulfur metabolism; hydrogen sulfide biosynthesis; sulfite from sulfate: step 1/3. Functionally, with CysN forms the ATP sulfurylase (ATPS) that catalyzes the adenylation of sulfate producing adenosine 5'-phosphosulfate (APS) and diphosphate, the first enzymatic step in sulfur assimilation pathway. APS synthesis involves the formation of a high-energy phosphoric-sulfuric acid anhydride bond driven by GTP hydrolysis by CysN coupled to ATP hydrolysis by CysD. The sequence is that of Sulfate adenylyltransferase subunit 2 from Methylococcus capsulatus (strain ATCC 33009 / NCIMB 11132 / Bath).